The primary structure comprises 315 residues: Calumenin-B (315 aa).

The first 19 residues, 1-19 (MEQWPLLFVVALCILQSSS), serve as a signal peptide directing secretion. Residues 22–39 (MEKKDRVHHDAPLSNKDH) show a composition bias toward basic and acidic residues. The segment at 22–42 (MEKKDRVHHDAPLSNKDHDDE) is disordered. EF-hand domains follow at residues 68–103 (ESKE…AQRR), 104–139 (WIYE…YILD), 151–186 (QMMT…EEFD), 188–223 (MKDI…QNGD), 229–264 (WVKT…ADYD), and 265–300 (HAEA…FVGS). Positions 81, 83, 85, 92, 117, 119, 121, 128, 164, 166, 168, 170, 175, 201, 203, 205, 212, 242, 244, 246, 248, 253, 278, 280, 282, 284, and 289 each coordinate Ca(2+). A Prevents secretion from ER motif is present at residues 312-315 (HDEF).

This sequence belongs to the CREC family. Interacts with ggcx.

It localises to the endoplasmic reticulum membrane. The protein localises to the golgi apparatus. Its subcellular location is the secreted. It is found in the melanosome. The protein resides in the sarcoplasmic reticulum lumen. In terms of biological role, involved in regulation of vitamin K-dependent carboxylation of multiple N-terminal glutamate residues. Seems to inhibit gamma-carboxylase ggcx. Binds 7 calcium ions with a low affinity. This Danio rerio (Zebrafish) protein is Calumenin-B (calub).